The chain runs to 76 residues: uncharacterized protein (76 aa).

This is an uncharacterized protein from Magallana gigas (Pacific oyster).